A 213-amino-acid chain; its full sequence is Orotate phosphoribosyltransferase (213 aa).

K26 lines the 5-phospho-alpha-D-ribose 1-diphosphate pocket. Residue 34 to 35 coordinates orotate; sequence FF. 5-phospho-alpha-D-ribose 1-diphosphate contacts are provided by residues 72–73, R99, K100, K103, H105, and 124–132; these read YK and DDVITAGTA. Residues T128 and R156 each coordinate orotate.

The protein belongs to the purine/pyrimidine phosphoribosyltransferase family. PyrE subfamily. Homodimer. Mg(2+) serves as cofactor.

It catalyses the reaction orotidine 5'-phosphate + diphosphate = orotate + 5-phospho-alpha-D-ribose 1-diphosphate. It participates in pyrimidine metabolism; UMP biosynthesis via de novo pathway; UMP from orotate: step 1/2. Catalyzes the transfer of a ribosyl phosphate group from 5-phosphoribose 1-diphosphate to orotate, leading to the formation of orotidine monophosphate (OMP). The chain is Orotate phosphoribosyltransferase from Aliivibrio fischeri (strain MJ11) (Vibrio fischeri).